The following is a 429-amino-acid chain: Glutamate-1-semialdehyde 2,1-aminomutase 2 (429 aa).

Lysine 268 carries the N6-(pyridoxal phosphate)lysine modification.

The protein belongs to the class-III pyridoxal-phosphate-dependent aminotransferase family. HemL subfamily. As to quaternary structure, homodimer. Pyridoxal 5'-phosphate serves as cofactor.

Its subcellular location is the cytoplasm. It catalyses the reaction (S)-4-amino-5-oxopentanoate = 5-aminolevulinate. Its pathway is porphyrin-containing compound metabolism; protoporphyrin-IX biosynthesis; 5-aminolevulinate from L-glutamyl-tRNA(Glu): step 2/2. The polypeptide is Glutamate-1-semialdehyde 2,1-aminomutase 2 (Bacillus cereus (strain AH820)).